The primary structure comprises 163 residues: Small ribosomal subunit protein bS18c (163 aa).

Disordered stretches follow at residues 1–54 (MYTS…PGDR) and 121–163 (ITGP…SSDC). Residues 7–48 (PFHKSKQTFHKSKQTFRKSKQTFRKFKQPFRKPKQPFRRRPR) are compositionally biased toward basic residues. The segment covering 140–163 (NSNRNLRNSNQTLRNNNRNLSSDC) has biased composition (low complexity).

It belongs to the bacterial ribosomal protein bS18 family. Part of the 30S ribosomal subunit.

The protein resides in the plastid. Its subcellular location is the chloroplast. This chain is Small ribosomal subunit protein bS18c, found in Oryza nivara (Indian wild rice).